A 64-amino-acid polypeptide reads, in one-letter code: MASKKGVRLIITVECTECRSNPDKRTPGVSRYTTSKNRRNTTGRLEIKKYCPHCNKHTVHKEIK.

The protein belongs to the bacterial ribosomal protein bL33 family.

This chain is Large ribosomal subunit protein bL33, found in Microcystis aeruginosa (strain NIES-843 / IAM M-2473).